The primary structure comprises 409 residues: Argininosuccinate synthase (409 aa).

Residues 12 to 20 and Ala-39 each bind ATP; that span reads AYSGGLDTS. Tyr-91 is an L-citrulline binding site. Gly-121 lines the ATP pocket. L-aspartate-binding residues include Thr-123, Asn-127, and Asp-128. Residue Asn-127 participates in L-citrulline binding. Residues Arg-131, Ser-180, Ser-189, Glu-265, and Tyr-277 each contribute to the L-citrulline site.

This sequence belongs to the argininosuccinate synthase family. Type 1 subfamily. As to quaternary structure, homotetramer.

The protein localises to the cytoplasm. It catalyses the reaction L-citrulline + L-aspartate + ATP = 2-(N(omega)-L-arginino)succinate + AMP + diphosphate + H(+). It participates in amino-acid biosynthesis; L-arginine biosynthesis; L-arginine from L-ornithine and carbamoyl phosphate: step 2/3. The sequence is that of Argininosuccinate synthase from Buchnera aphidicola subsp. Baizongia pistaciae (strain Bp).